A 178-amino-acid polypeptide reads, in one-letter code: Large ribosomal subunit protein uL6 (178 aa).

This sequence belongs to the universal ribosomal protein uL6 family. In terms of assembly, part of the 50S ribosomal subunit.

In terms of biological role, this protein binds to the 23S rRNA, and is important in its secondary structure. It is located near the subunit interface in the base of the L7/L12 stalk, and near the tRNA binding site of the peptidyltransferase center. This is Large ribosomal subunit protein uL6 from Campylobacter concisus (strain 13826).